Here is a 159-residue protein sequence, read N- to C-terminus: Ribosome maturation factor RimP (159 aa).

The protein belongs to the RimP family.

The protein localises to the cytoplasm. In terms of biological role, required for maturation of 30S ribosomal subunits. The polypeptide is Ribosome maturation factor RimP (Streptococcus pneumoniae (strain 70585)).